A 419-amino-acid polypeptide reads, in one-letter code: DNA polymerase IV (419 aa).

Positions 12 to 193 (IFHIDMNCFY…MSVEEMYGIG (182 aa)) constitute a UmuC domain. Positions 16 and 112 each coordinate Mg(2+). Residue glutamate 113 is part of the active site. Positions 388–419 (IITSQKNKNESQENQQPRTSFQKDFLDDYKKP) are disordered.

Belongs to the DNA polymerase type-Y family. In terms of assembly, monomer. Mg(2+) is required as a cofactor.

It localises to the cytoplasm. The catalysed reaction is DNA(n) + a 2'-deoxyribonucleoside 5'-triphosphate = DNA(n+1) + diphosphate. In terms of biological role, poorly processive, error-prone DNA polymerase involved in untargeted mutagenesis. Copies undamaged DNA at stalled replication forks, which arise in vivo from mismatched or misaligned primer ends. These misaligned primers can be extended by PolIV. Exhibits no 3'-5' exonuclease (proofreading) activity. May be involved in translesional synthesis, in conjunction with the beta clamp from PolIII. This is DNA polymerase IV from Oceanobacillus iheyensis (strain DSM 14371 / CIP 107618 / JCM 11309 / KCTC 3954 / HTE831).